Reading from the N-terminus, the 458-residue chain is Ammonium transporter Rh type B (458 aa).

The Cytoplasmic segment spans residues 1–13 (MAKSPRRVAGRRL). A helical membrane pass occupies residues 14-34 (LLPLLCLFFQGATAILFAIFV). Residues 35–61 (RYDQQTDAALWHGGNHSNADNEFYFRY) lie on the Extracellular side of the membrane. A glycan (N-linked (GlcNAc...) asparagine) is linked at N49. Residues 62–82 (PSFQDVHAMVFVGFGFLMVFL) traverse the membrane as a helical segment. The Cytoplasmic portion of the chain corresponds to 83-86 (QRYG). A helical transmembrane segment spans residues 87 to 107 (YSSLGFTFLLGAFALQWATLV). Over 108-124 (QGFLHSFHGGHIHVGME) the chain is Extracellular. Residues 125–145 (SLINADFCAGAVLISFGAVLG) traverse the membrane as a helical segment. At 146–149 (KTGP) the chain is on the cytoplasmic side. Residues 150-170 (AQLLLMALLEVALFGLNEFVL) form a helical membrane-spanning segment. The Extracellular segment spans residues 171–178 (LCLLGVRD). Residues 179 to 201 (AGGSMTIHTFGAYFGLVLSRVLY) form a helical membrane-spanning segment. Topologically, residues 202-219 (RPHLEKSQHRQGSVYHSD) are cytoplasmic. A helical membrane pass occupies residues 220–240 (LFAMIGTIFLWIFWPSFNSAL). Residues 241–251 (TSRGDGQPRTA) lie on the Extracellular side of the membrane. The helical transmembrane segment at 252–272 (LNTYYSLTASTLSTFALSALV) threads the bilayer. The Cytoplasmic portion of the chain corresponds to 273–282 (GKDGRLDMVH). Residues 283–303 (VQNAALAGGVVVGTASEMMLT) traverse the membrane as a helical segment. A topological domain (extracellular) is located at residue P304. A helical membrane pass occupies residues 305-325 (FGALAAGCLAGAISTLGYKFF). Residues 326-346 (TPILESKLKIQDTCGVHNLHG) lie on the Cytoplasmic side of the membrane. Residues 347–367 (MPGVLGALLGALMTGLTTHEA) form a helical membrane-spanning segment. At 368–393 (YGDGLQSVFPLIAEGQRSATSQAIYQ) the chain is on the extracellular side. The helical transmembrane segment at 394 to 414 (LFGLSVTLLFASAGGVLGGLL) threads the bilayer. Over 415 to 458 (LKLPFLDAPPDSQCYEDQMCWEVPGEHGYEAQEALRVEEPDTEA) the chain is Cytoplasmic. The tract at residues 416–424 (KLPFLDAPP) is interaction with ANK3. The Basolateral sorting signal signature appears at 429 to 432 (YEDQ).

This sequence belongs to the ammonium transporter (TC 2.A.49) family. Rh subfamily. Interacts (via C-terminus) with ANK2 and ANK3; required for targeting to the basolateral membrane. N-glycosylated.

It localises to the cell membrane. The protein resides in the basolateral cell membrane. It carries out the reaction NH4(+)(in) = NH4(+)(out). The enzyme catalyses methylamine(out) = methylamine(in). The catalysed reaction is CO2(out) = CO2(in). In terms of biological role, ammonium transporter involved in the maintenance of acid-base homeostasis. Transports ammonium and its related derivative methylammonium across the basolateral plasma membrane of epithelial cells likely contributing to renal transepithelial ammonia transport and ammonia metabolism. May transport either NH4(+) or NH3 ammonia species predominantly mediating an electrogenic NH4(+) transport. May act as a CO2 channel providing for renal acid secretion. This Oryctolagus cuniculus (Rabbit) protein is Ammonium transporter Rh type B (RHBG).